The chain runs to 638 residues: MIPNGSLNFEDEQFIESSVAKLNALRKSGQFCDVKLQVCGHEMLAHRAVLACCSPFLFEIFNSDSESNGISLVRFDDLNPEAVEVLLNYAYTSQLKAETDLVKDVYSAAKKLKIDRVKQVCGDYLISKIDAQSGISCRNFVNTMGDWRLLTKIDNYIQEHLLEISEQDDFLKLPRLNLEIMLEENVSLPSNGKLYTKVINWVQRSIWENGENLDALMEEVQTLYYSADHKLLDGSSLGEHTEAHEDNIQLIQKKSPRENNHKNLISSSSGSLSPSALIQCPKHEWKIIASEKKTNNTYLCLAVLNSTLCVIFLHGRNSPVNSPSSTPRLTKSLSLEIQPEDSLERVMSPMHYARSGLGTAELNGKLIAAGGYNREECLRTVECYDLETDIWTFIAPMKTPRARFQMAVLMDHLYVVGGSNGHSDDLSCGEKYDPKSNIWTPVPELRSNRCNAGVCALNGNLYVVGGSDPYGQKGLKNCDVFNPITRMWTCCAQLNIRRHQPAVCELGNKIYIIGGAESWNCLNSVECYNPQNDTWTLVAPMNVARRGSGVAVYDGKLLVVGGFDGTHALCCVESYNPERNEWKMVGSMTSSRSNAGVVAVGNQIYAAGGFDGNEFLNTVEVYNPQTDEWSPFTQLCES.

Positions 32-99 (CDVKLQVCGH…AYTSQLKAET (68 aa)) constitute a BTB domain. Residues 134-233 (GISCRNFVNT…YYSADHKLLD (100 aa)) form the BACK domain. Residues 251–273 (IQKKSPRENNHKNLISSSSGSLS) form a disordered region. 6 Kelch repeats span residues 365-411 (KLIA…VLMD), 412-459 (HLYV…ALNG), 461-508 (LYVV…ELGN), 509-555 (KIYI…VYDG), 557-602 (LLVV…AVGN), and 604-638 (IYAA…LCES).

It localises to the cytoplasm. It is found in the cytoskeleton. The protein localises to the nucleus. Plays a role in cell division and in the dynamic organization of the actin skeleton as a stabilizer of actin filaments by association with F-actin through Kelch repeats. The protein is Influenza virus NS1A-binding protein homolog (ivns1abp) of Xenopus laevis (African clawed frog).